Reading from the N-terminus, the 402-residue chain is S-adenosylmethionine synthase (402 aa).

Position 17 (histidine 17) interacts with ATP. Residue aspartate 19 participates in Mg(2+) binding. K(+) is bound at residue glutamate 45. Residues glutamate 58 and glutamine 101 each coordinate L-methionine. Residues 101-111 are flexible loop; sequence QSSDIADGVNE. ATP contacts are provided by residues 177–179, 244–245, aspartate 253, 259–260, alanine 276, and lysine 280; these read DAK, RF, and RK. Aspartate 253 contributes to the L-methionine binding site. Lysine 284 provides a ligand contact to L-methionine.

The protein belongs to the AdoMet synthase family. As to quaternary structure, homotetramer; dimer of dimers. Requires Mg(2+) as cofactor. The cofactor is K(+).

Its subcellular location is the cytoplasm. It carries out the reaction L-methionine + ATP + H2O = S-adenosyl-L-methionine + phosphate + diphosphate. It functions in the pathway amino-acid biosynthesis; S-adenosyl-L-methionine biosynthesis; S-adenosyl-L-methionine from L-methionine: step 1/1. Its function is as follows. Catalyzes the formation of S-adenosylmethionine (AdoMet) from methionine and ATP. The overall synthetic reaction is composed of two sequential steps, AdoMet formation and the subsequent tripolyphosphate hydrolysis which occurs prior to release of AdoMet from the enzyme. In Lactobacillus johnsonii (strain CNCM I-12250 / La1 / NCC 533), this protein is S-adenosylmethionine synthase.